The sequence spans 438 residues: sn-glycerol-3-phosphate-binding periplasmic protein UgpB (438 aa).

The first 23 residues, 1 to 23, serve as a signal peptide directing secretion; that stretch reads MISLRHTALGLALSLAFTGQALA. Positions 65, 89, 144, 270, 307, 346, and 397 each coordinate sn-glycerol 3-phosphate.

This sequence belongs to the bacterial solute-binding protein 1 family. As to quaternary structure, the complex is composed of two ATP-binding proteins (UgpC), two transmembrane proteins (UgpA and UgpE) and a solute-binding protein (UgpB).

Its subcellular location is the periplasm. Functionally, part of the ABC transporter complex UgpBAEC involved in sn-glycerol-3-phosphate (G3P) import. Binds G3P. The polypeptide is sn-glycerol-3-phosphate-binding periplasmic protein UgpB (ugpB) (Salmonella paratyphi A (strain ATCC 9150 / SARB42)).